The following is a 320-amino-acid chain: GRAM domain-containing protein 2A (320 aa).

Residues 33–56 (TEKPGKVQEPPDDGSLHWSEGSKG) form a disordered region. Residues 74–141 (QQYHKLFKDI…VSVQLIKKHK (68 aa)) form the GRAM domain. Residues 278 to 298 (LLKVIFVMICFLVLSSSYLAF) form a helical membrane-spanning segment.

Post-translationally, phosphorylated.

It localises to the endoplasmic reticulum membrane. It is found in the cell membrane. Participates in the organization ofendoplasmic reticulum-plasma membrane contact sites (EPCS) with pleiotropic functions including STIM1 recruitment and calcium homeostasis. Constitutive tether that co-localize with ESYT2/3 tethers at endoplasmic reticulum-plasma membrane contact sites in a phosphatidylinositol lipid-dependent manner. Pre-marks the subset of phosphtidylinositol 4,5-biphosphate (PI(4,5)P2)-enriched EPCS destined for the store operated calcium entry pathway (SOCE). In Mus musculus (Mouse), this protein is GRAM domain-containing protein 2A.